The following is a 289-amino-acid chain: ATP synthase gamma chain (289 aa).

The protein belongs to the ATPase gamma chain family. As to quaternary structure, F-type ATPases have 2 components, CF(1) - the catalytic core - and CF(0) - the membrane proton channel. CF(1) has five subunits: alpha(3), beta(3), gamma(1), delta(1), epsilon(1). CF(0) has three main subunits: a, b and c.

The protein localises to the cell inner membrane. Produces ATP from ADP in the presence of a proton gradient across the membrane. The gamma chain is believed to be important in regulating ATPase activity and the flow of protons through the CF(0) complex. This is ATP synthase gamma chain from Coxiella burnetii (strain CbuG_Q212) (Coxiella burnetii (strain Q212)).